The primary structure comprises 994 residues: Translation initiation factor IF-2 (994 aa).

Polar residues-rich tracts occupy residues 1–10 (MSDENNNGRN) and 28–40 (SVSS…SFSH). Residues 1-405 (MSDENNNGRN…REKRKGGAQE (405 aa)) are disordered. A compositionally biased stretch (low complexity) spans 76–91 (PQKPAGPAQAPRAPQG). Residues 98–131 (AEERAARQRAIELARQQEADRRAREERARAEAEA) are compositionally biased toward basic and acidic residues. Low complexity predominate over residues 132-146 (ARAAQQKAAQAAAEP). Residues 147–157 (PAAPPPAPAAP) are compositionally biased toward pro residues. The span at 158-172 (PAAAAPAAPAAEAAP) shows a compositional bias: low complexity. Over residues 173–188 (APKPAPSPRPVPPSAP) the composition is skewed to pro residues. A compositionally biased stretch (low complexity) spans 189–204 (APQAARPAAEAPPRQA). Composition is skewed to basic and acidic residues over residues 216-235 (PDRR…RPSN) and 247-273 (PRRD…DRPQ). Residues 298 to 310 (RGPGGPRGPGGPR) show a composition bias toward gly residues. Basic and acidic residues-rich tracts occupy residues 336-350 (VDRR…RDPG) and 390-402 (RARE…RKGG). In terms of domain architecture, tr-type G spans 492-662 (PRPPVVAVMG…LLQAEVLDLK (171 aa)). The G1 stretch occupies residues 501 to 508 (GHVDHGKT). A GTP-binding site is contributed by 501–508 (GHVDHGKT). The G2 stretch occupies residues 526–530 (GITQH). The interval 548-551 (DTPG) is G3. Residues 548-552 (DTPGH) and 602-605 (NKID) each bind GTP. The segment at 602 to 605 (NKID) is G4. The segment at 638–640 (SAT) is G5.

This sequence belongs to the TRAFAC class translation factor GTPase superfamily. Classic translation factor GTPase family. IF-2 subfamily.

The protein resides in the cytoplasm. Functionally, one of the essential components for the initiation of protein synthesis. Protects formylmethionyl-tRNA from spontaneous hydrolysis and promotes its binding to the 30S ribosomal subunits. Also involved in the hydrolysis of GTP during the formation of the 70S ribosomal complex. The sequence is that of Translation initiation factor IF-2 from Phenylobacterium zucineum (strain HLK1).